A 98-amino-acid polypeptide reads, in one-letter code: NADH-ubiquinone oxidoreductase chain 4L (98 aa).

Helical transmembrane passes span M1 to M21, S29 to L49, and I61 to V81.

This sequence belongs to the complex I subunit 4L family. Core subunit of respiratory chain NADH dehydrogenase (Complex I) which is composed of 45 different subunits.

The protein localises to the mitochondrion inner membrane. The enzyme catalyses a ubiquinone + NADH + 5 H(+)(in) = a ubiquinol + NAD(+) + 4 H(+)(out). Functionally, core subunit of the mitochondrial membrane respiratory chain NADH dehydrogenase (Complex I) which catalyzes electron transfer from NADH through the respiratory chain, using ubiquinone as an electron acceptor. Part of the enzyme membrane arm which is embedded in the lipid bilayer and involved in proton translocation. The chain is NADH-ubiquinone oxidoreductase chain 4L (MT-ND4L) from Pusa caspica (Caspian seal).